The primary structure comprises 89 residues: Tuberculin-active protein (89 aa).

The cysteines at positions 27 and 59 are disulfide-linked. Positions 61 to 89 are disordered; it reads DGGSESEGKNGSQMRLIADVGPESATVAK.

Its function is as follows. Tuberculin is the soluble, proteinaceous cell substance of the bacterium, to which infected animals become hypersensitive and react characteristically to dermal injections. This Mycobacterium tuberculosis protein is Tuberculin-active protein.